A 151-amino-acid polypeptide reads, in one-letter code: Large ribosomal subunit protein uL13 (151 aa).

It belongs to the universal ribosomal protein uL13 family. As to quaternary structure, part of the 50S ribosomal subunit.

Functionally, this protein is one of the early assembly proteins of the 50S ribosomal subunit, although it is not seen to bind rRNA by itself. It is important during the early stages of 50S assembly. This Microchaete diplosiphon (Fremyella diplosiphon) protein is Large ribosomal subunit protein uL13.